Here is a 238-residue protein sequence, read N- to C-terminus: Probable succinyl-CoA:3-ketoacid coenzyme A transferase subunit A (238 aa).

A CoA-binding site is contributed by 24-30; sequence GGFGLCG.

This sequence belongs to the 3-oxoacid CoA-transferase subunit A family. Heterodimer of a subunit A and a subunit B.

The enzyme catalyses a 3-oxo acid + succinyl-CoA = a 3-oxoacyl-CoA + succinate. The chain is Probable succinyl-CoA:3-ketoacid coenzyme A transferase subunit A (scoA) from Bacillus subtilis (strain 168).